The chain runs to 167 residues: Heme-degrading monooxygenase (167 aa).

Positions 1 to 50 are important for catalysis; the sequence is MKKVFITTGTEHYLRQLMANYTGGNVTLLQNFSQSLLYQESTGEKLFQEG. An ABM domain is found at 67–154; sequence VVVFEYIHLR…NNTQSGFSHE (88 aa).

It belongs to the antibiotic biosynthesis monooxygenase family. Monomer.

It localises to the cytoplasm. Functionally, catalyzes the degradation of heme to biliverdin in the presence of a suitable electron donor such as ascorbate, with the subsequent release of iron. Hardly any CO is released by the heme degradation reaction. Binds heme. Allows bacterial pathogens to use the host heme as an iron source. Release of iron from heme may play a crucial role in the pathogenicity of L.monocytogenes. The protein is Heme-degrading monooxygenase of Listeria monocytogenes serovar 1/2a (strain ATCC BAA-679 / EGD-e).